We begin with the raw amino-acid sequence, 368 residues long: tRNA 2-selenouridine synthase (368 aa).

A Rhodanese domain is found at 15–138 (FLNQHPIMDV…MRQYLIGVIE (124 aa)). The S-selanylcysteine intermediate role is filled by cysteine 98.

This sequence belongs to the SelU family. In terms of assembly, monomer.

The enzyme catalyses 5-methylaminomethyl-2-thiouridine(34) in tRNA + selenophosphate + (2E)-geranyl diphosphate + H2O + H(+) = 5-methylaminomethyl-2-selenouridine(34) in tRNA + (2E)-thiogeraniol + phosphate + diphosphate. It carries out the reaction 5-methylaminomethyl-2-thiouridine(34) in tRNA + (2E)-geranyl diphosphate = 5-methylaminomethyl-S-(2E)-geranyl-thiouridine(34) in tRNA + diphosphate. It catalyses the reaction 5-methylaminomethyl-S-(2E)-geranyl-thiouridine(34) in tRNA + selenophosphate + H(+) = 5-methylaminomethyl-2-(Se-phospho)selenouridine(34) in tRNA + (2E)-thiogeraniol. The catalysed reaction is 5-methylaminomethyl-2-(Se-phospho)selenouridine(34) in tRNA + H2O = 5-methylaminomethyl-2-selenouridine(34) in tRNA + phosphate. Functionally, involved in the post-transcriptional modification of the uridine at the wobble position (U34) of tRNA(Lys), tRNA(Glu) and tRNA(Gln). Catalyzes the conversion of 2-thiouridine (S2U-RNA) to 2-selenouridine (Se2U-RNA). Acts in a two-step process involving geranylation of 2-thiouridine (S2U) to S-geranyl-2-thiouridine (geS2U) and subsequent selenation of the latter derivative to 2-selenouridine (Se2U) in the tRNA chain. This Shewanella baltica (strain OS185) protein is tRNA 2-selenouridine synthase.